The following is a 392-amino-acid chain: L-rhamnonate dehydratase (392 aa).

The substrate site is built by His22 and Arg48. 3 residues coordinate Mg(2+): Asp214, Glu240, and Glu268. Residue His318 is the Proton acceptor of the active site. Glu338 contacts substrate.

This sequence belongs to the mandelate racemase/muconate lactonizing enzyme family. RhamD subfamily. Homooctamer; tetramer of dimers. It depends on Mg(2+) as a cofactor.

It carries out the reaction L-rhamnonate = 2-dehydro-3-deoxy-L-rhamnonate + H2O. Functionally, catalyzes the dehydration of L-rhamnonate to 2-keto-3-deoxy-L-rhamnonate (KDR). The protein is L-rhamnonate dehydratase of Burkholderia orbicola (strain MC0-3).